The chain runs to 369 residues: Protein VP6 (369 aa).

Positions 20–208 (LEQRSIAPLL…EEAKVGGGDR (189 aa)) are disordered. The span at 29-66 (LREKNSTEAKSKLKEDGEKKNKSEKEENKIHDDRRVES) shows a compositional bias: basic and acidic residues. Gly residues-rich tracts occupy residues 92-111 (TGGG…GGVG) and 162-171 (TSGGLQGRGG). Residues 196 to 208 (TEGEEAKVGGGDR) are compositionally biased toward basic and acidic residues.

Belongs to the orbivirus VP6 family.

It localises to the virion. The polypeptide is Protein VP6 (S9) (African horse sickness virus 3 (AHSV-3)).